We begin with the raw amino-acid sequence, 253 residues long: 5'-nucleotidase SurE (253 aa).

Residues Asp8, Asp9, Ser39, and Asn91 each coordinate a divalent metal cation.

This sequence belongs to the SurE nucleotidase family. Requires a divalent metal cation as cofactor.

It localises to the cytoplasm. The catalysed reaction is a ribonucleoside 5'-phosphate + H2O = a ribonucleoside + phosphate. Functionally, nucleotidase that shows phosphatase activity on nucleoside 5'-monophosphates. In Leptothrix cholodnii (strain ATCC 51168 / LMG 8142 / SP-6) (Leptothrix discophora (strain SP-6)), this protein is 5'-nucleotidase SurE.